The primary structure comprises 234 residues: Small ribosomal subunit protein eS1y (234 aa).

The span at 1–18 (MAVGKNKRISKGKKGGKK) shows a compositional bias: basic residues. The disordered stretch occupies residues 1–20 (MAVGKNKRISKGKKGGKKKA).

The protein belongs to the eukaryotic ribosomal protein eS1 family. Component of the small ribosomal subunit. Mature ribosomes consist of a small (40S) and a large (60S) subunit. The 40S subunit contains about 33 different proteins and 1 molecule of RNA (18S). The 60S subunit contains about 49 different proteins and 3 molecules of RNA (25S, 5.8S and 5S).

It localises to the cytoplasm. This chain is Small ribosomal subunit protein eS1y, found in Vitis vinifera (Grape).